A 375-amino-acid chain; its full sequence is MAQHDFAPAWLNFPTPPSSTKPFLYSDKHSEGLGRSDCAFNVNRQRHSSSDAFDSAIGRPHGGNLAKREKIAWRPQSRAGAEPTWQRDTSPHPYSMKSQLHSENNTSEIDLPRKVDREERKMFEVEDFSSLYPEHERGKNSFAAGLWEYPVSDRSRSSQMLGIKKGVKDDFSLSGYSIAAGNQSLPGKHWAGIKKEECKSLTKESSIGSSFYQDCPHEKYRPNTSLHAELLAVTPCSLEGEEDTNLNNRNGSCPERDINLNFDENKISEDNGNTLMSGQISSAYPPDGVLSSSLEAEFRLLREMGWQEDSENDETCAPLTEDEMKEFQAISEQLQKNGLRKHVFLRNALALDLFHDSVQKEDSETSSSSDTSDDE.

Disordered regions lie at residues 49 to 109 (SSDA…TSEI) and 356 to 375 (DSVQ…SDDE). A compositionally biased stretch (polar residues) spans 96–108 (MKSQLHSENNTSE). The segment covering 365-375 (TSSSSDTSDDE) has biased composition (low complexity).

It belongs to the vasculin family.

It is found in the nucleus. In terms of biological role, functions as a GC-rich promoter-specific transactivating transcription factor. This chain is Vasculin (gpbp1), found in Xenopus tropicalis (Western clawed frog).